Reading from the N-terminus, the 163-residue chain is MGVPRAREGRGAGSQSPPRGRCLHPFRWGSQDRGRGEGLALSPLLPGVPPPPAMGVPRDRGGRGAGSQSTPRGGCLLPPRLGSQQPAGEEGLVLSPRLAGDASPCCDGSPKSQGVKRGWLSVPTSRGVPPPPAIGVLIARGGRGAGSQSLPRGWSFTPLRWGS.

Residues 1 to 10 (MGVPRAREGR) are compositionally biased toward basic and acidic residues. Residues 1 to 163 (MGVPRAREGR…WSFTPLRWGS (163 aa)) are disordered.

This is an uncharacterized protein from Homo sapiens (Human).